A 334-amino-acid polypeptide reads, in one-letter code: Homoserine O-acetyltransferase (334 aa).

The AB hydrolase-1 domain occupies 61–318 (LVLHALTGDS…GSIHGHDAFL (258 aa)). Serine 148 functions as the Nucleophile in the catalytic mechanism. Arginine 205 is a binding site for substrate. Active-site residues include aspartate 285 and histidine 314. Aspartate 315 contributes to the substrate binding site.

This sequence belongs to the AB hydrolase superfamily. MetX family. Homodimer.

The protein localises to the cytoplasm. It carries out the reaction L-homoserine + acetyl-CoA = O-acetyl-L-homoserine + CoA. It participates in amino-acid biosynthesis; L-methionine biosynthesis via de novo pathway; O-acetyl-L-homoserine from L-homoserine: step 1/1. Transfers an acetyl group from acetyl-CoA to L-homoserine, forming acetyl-L-homoserine. The polypeptide is Homoserine O-acetyltransferase (Deinococcus radiodurans (strain ATCC 13939 / DSM 20539 / JCM 16871 / CCUG 27074 / LMG 4051 / NBRC 15346 / NCIMB 9279 / VKM B-1422 / R1)).